The sequence spans 782 residues: Cyclic nucleotide-gated channel beta-3 (782 aa).

Disordered stretches follow at residues 1–111 (MFKS…PKSK) and 147–168 (GDIS…PSTQ). The Cytoplasmic portion of the chain corresponds to 1-213 (MFKSLTIKSN…SIDSYTDRLY (213 aa)). 2 stretches are compositionally biased toward basic and acidic residues: residues 13–25 (KPRE…KQDP) and 57–73 (EESH…KNSL). Composition is skewed to polar residues over residues 74–83 (RDLTTNPNHQ) and 152–168 (PEAS…PSTQ). A helical membrane pass occupies residues 214-237 (LLWLLLVTIAYNWNCWLIPLRLVF). The Extracellular segment spans residues 238-244 (PYQTPDN). The helical transmembrane segment at 245–265 (THYWFITDITCDIIYLCDMLL) threads the bilayer. Over 266 to 294 (IQPRLQFIKGGDIMVDSNELKRHYRSSTK) the chain is Cytoplasmic. Residues 295-312 (FQLDVASVMPFDVFYLFF) form a helical membrane-spanning segment. The Extracellular portion of the chain corresponds to 313–315 (GFN). A helical membrane pass occupies residues 316 to 330 (PVFRMNRILKYTSFF). The Cytoplasmic portion of the chain corresponds to 331 to 343 (EFNHHLESIMDKA). An ion conduction pathway region spans residues 343–442 (AYIYRVIRTT…IGQMQDVIGA (100 aa)). A helical transmembrane segment spans residues 344–366 (YIYRVIRTTGYLLYTLHINACIY). Topologically, residues 367 to 388 (YWASDYEGIGSTKWVYNGEGNK) are extracellular. Transmembrane regions (helical) follow at residues 389–415 (YLRC…SFEI) and 416–440 (VFQL…QDVI). The selectivity filter stretch occupies residues 402 to 405 (TIGG). The Cytoplasmic segment spans residues 441–782 (GAATANQNNF…TIEVKEKAKQ (342 aa)). Residues 445-521 (ANQNNFRISM…SIISKVELFK (77 aa)) form a C-linker region. Residues 525 to 641 (TQMIYDMLLR…LLMKKASVLL (117 aa)) are cyclic nucleotide-binding domain. Residues Gly586, Glu587, Arg599, and Thr600 each contribute to the 3',5'-cyclic GMP site. Residues 692 to 724 (EQTIQKTSENSEEGGGKRREYEDKEREPSEKIL) form a disordered region. The segment covering 705-724 (GGGKRREYEDKEREPSEKIL) has biased composition (basic and acidic residues).

It belongs to the cyclic nucleotide-gated cation channel (TC 1.A.1.5) family. CNGB3 subfamily. In terms of assembly, forms heterotetrameric channels composed of CNGA3 and CNGB3 subunits with 3:1 stoichiometry.

It localises to the cell membrane. It carries out the reaction Ca(2+)(in) = Ca(2+)(out). The catalysed reaction is Na(+)(in) = Na(+)(out). It catalyses the reaction K(+)(in) = K(+)(out). The enzyme catalyses NH4(+)(in) = NH4(+)(out). It carries out the reaction Rb(+)(in) = Rb(+)(out). The catalysed reaction is Li(+)(in) = Li(+)(out). It catalyses the reaction Cs(+)(in) = Cs(+)(out). In terms of biological role, pore-forming subunit of the cone cyclic nucleotide-gated channel. Mediates cone photoresponses at bright light converting transient changes in intracellular cGMP levels into electrical signals. In the dark, cGMP levels are high and keep the channel open enabling a steady inward current carried by Na(+) and Ca(2+) ions that leads to membrane depolarization and neurotransmitter release from synaptic terminals. Upon photon absorption cGMP levels decline leading to channel closure and membrane hyperpolarization that ultimately slows neurotransmitter release and signals the presence of light, the end point of the phototransduction cascade. Conducts cGMP- and cAMP-gated ion currents, with permeability for monovalent and divalent cations. This Canis lupus familiaris (Dog) protein is Cyclic nucleotide-gated channel beta-3.